We begin with the raw amino-acid sequence, 261 residues long: Thiazole synthase (261 aa).

The active-site Schiff-base intermediate with DXP is Lys95. Residues Gly156, 182 to 183 (AG), and 204 to 205 (NT) contribute to the 1-deoxy-D-xylulose 5-phosphate site.

The protein belongs to the ThiG family. As to quaternary structure, homotetramer. Forms heterodimers with either ThiH or ThiS.

It is found in the cytoplasm. It catalyses the reaction [ThiS sulfur-carrier protein]-C-terminal-Gly-aminoethanethioate + 2-iminoacetate + 1-deoxy-D-xylulose 5-phosphate = [ThiS sulfur-carrier protein]-C-terminal Gly-Gly + 2-[(2R,5Z)-2-carboxy-4-methylthiazol-5(2H)-ylidene]ethyl phosphate + 2 H2O + H(+). The protein operates within cofactor biosynthesis; thiamine diphosphate biosynthesis. Functionally, catalyzes the rearrangement of 1-deoxy-D-xylulose 5-phosphate (DXP) to produce the thiazole phosphate moiety of thiamine. Sulfur is provided by the thiocarboxylate moiety of the carrier protein ThiS. In vitro, sulfur can be provided by H(2)S. The protein is Thiazole synthase of Pectobacterium carotovorum subsp. carotovorum (strain PC1).